The primary structure comprises 166 residues: Glutamyl-tRNA(Gln) amidotransferase subunit C-2, mitochondrial (166 aa).

Belongs to the GatC family. As to quaternary structure, subunit of the heterotrimeric GatCAB amidotransferase (AdT) complex, composed of A, B and C subunits.

The protein localises to the mitochondrion. The catalysed reaction is L-glutamyl-tRNA(Gln) + L-glutamine + ATP + H2O = L-glutaminyl-tRNA(Gln) + L-glutamate + ADP + phosphate + H(+). Functionally, allows the formation of correctly charged Gln-tRNA(Gln) through the transamidation of misacylated Glu-tRNA(Gln) in the mitochondria. The reaction takes place in the presence of glutamine and ATP through an activated gamma-phospho-Glu-tRNA(Gln). In Culex quinquefasciatus (Southern house mosquito), this protein is Glutamyl-tRNA(Gln) amidotransferase subunit C-2, mitochondrial.